The sequence spans 418 residues: Glycine betaine transport ATP-binding protein OpuAA (418 aa).

Residues K34–V270 form the ABC transporter domain. G66–S73 lines the ATP pocket. 2 CBS domains span residues I284–L340 and L344–E403.

The protein belongs to the ABC transporter superfamily. In terms of assembly, the complex is composed of two ATP-binding proteins (OpuAA), two transmembrane proteins (OpuAB) and a solute-binding protein (OpuAC).

The enzyme catalyses a quaternary ammonium(out) + ATP + H2O = a quaternary ammonium(in) + ADP + phosphate + H(+). Involved in a multicomponent binding-protein-dependent transport system for glycine betaine. Probably responsible for energy coupling to the transport system. This chain is Glycine betaine transport ATP-binding protein OpuAA (opuAA), found in Bacillus subtilis (strain 168).